Here is a 133-residue protein sequence, read N- to C-terminus: Glutaredoxin-C4, chloroplastic (133 aa).

A compositionally biased stretch (low complexity) spans methionine 1–proline 13. Residues methionine 1–proline 25 form a disordered region. Residues methionine 1 to methionine 27 constitute a chloroplast transit peptide. Residues leucine 29–alanine 129 form the Glutaredoxin domain. Cysteine 49 and cysteine 52 are joined by a disulfide.

This sequence belongs to the glutaredoxin family. CPYC subfamily.

The protein resides in the plastid. The protein localises to the chloroplast. Its function is as follows. Has a glutathione-disulfide oxidoreductase activity in the presence of NADPH and glutathione reductase. Reduces low molecular weight disulfides and proteins. This Oryza sativa subsp. japonica (Rice) protein is Glutaredoxin-C4, chloroplastic (GRXC4).